A 776-amino-acid polypeptide reads, in one-letter code: Protein translocase subunit SecA 2 (776 aa).

Residues Q80, 98–102 (GEGKT), and D486 contribute to the ATP site.

The protein belongs to the SecA family. Monomer and homodimer. Part of the essential Sec protein translocation apparatus which comprises SecA, SecYEG and auxiliary proteins SecDF. Other proteins may also be involved.

The protein localises to the cell membrane. It localises to the cytoplasm. The enzyme catalyses ATP + H2O + cellular proteinSide 1 = ADP + phosphate + cellular proteinSide 2.. Functionally, part of the Sec protein translocase complex. Interacts with the SecYEG preprotein conducting channel. Has a central role in coupling the hydrolysis of ATP to the transfer of proteins into and across the cell membrane, serving as an ATP-driven molecular motor driving the stepwise translocation of polypeptide chains across the membrane. The polypeptide is Protein translocase subunit SecA 2 (Listeria welshimeri serovar 6b (strain ATCC 35897 / DSM 20650 / CCUG 15529 / CIP 8149 / NCTC 11857 / SLCC 5334 / V8)).